We begin with the raw amino-acid sequence, 307 residues long: Farnesol kinase, chloroplastic (307 aa).

The transit peptide at 1-65 directs the protein to the chloroplast; the sequence is MATTSTTTKL…TKIRKSSLAA (65 aa). 7 helical membrane-spanning segments follow: residues 77–97, 116–136, 137–157, 177–194, 197–217, 237–257, and 265–285; these read VCAFGVTSIVAFSCLGFWGEI, IGLVFMLCWPLFSSGIQGALF, ASLVPGLNIVRMLLLGLGVYH, GPLYYVLSITSACIYYWK, PIAIAVICNLCAGDGMADIVG, IGMATAGFLASVAYMYYFASF, and GMILRFLVISIASALVESLPI.

The protein belongs to the polyprenol kinase family.

It localises to the plastid. The protein localises to the chloroplast membrane. It carries out the reaction (2E,6E)-farnesol + CTP = (2E,6E)-farnesyl phosphate + CDP + H(+). The enzyme catalyses (2E,6E)-farnesol + ATP = (2E,6E)-farnesyl phosphate + ADP + H(+). The catalysed reaction is (2E)-geraniol + ATP = (2E)-geranyl phosphate + ADP + H(+). It catalyses the reaction (2E,6E,10E)-geranylgeraniol + ATP = (2E,6E,10E)-geranylgeranyl phosphate + ADP + H(+). Functionally, kinase involved in negative regulation of abscisic acid (ABA) signaling. Substrate preference is farnesol &gt; geraniol &gt; geranylgeraniol, but has no activity with farnesyl phosphate. Can use CTP &gt; ATP &gt; GTP = UTP as phosphoryl donor. The protein is Farnesol kinase, chloroplastic of Arabidopsis thaliana (Mouse-ear cress).